Reading from the N-terminus, the 768-residue chain is ATP-dependent zinc metalloprotease FtsH (768 aa).

Over 1–33 the chain is Cytoplasmic; that stretch reads MADRDKNDIRKRLEELRKDNNRRNNRQDNGNRS. A helical transmembrane segment spans residues 34 to 54; sequence PFSGFLFFIFVILLFTFTLLF. The Periplasmic portion of the chain corresponds to 55 to 139; it reads HRDIQTYFQE…KLNSLQPSGG (85 aa). Residues 140 to 160 traverse the membrane as a helical segment; that stretch reads GFFLLLLGQFLPMIIMIGLMV. Residues 161 to 768 are Cytoplasmic-facing; the sequence is YLAKKMVGGS…SNFKLPSFME (608 aa). 238–245 provides a ligand contact to ATP; it reads GRPGTGKT. His461 is a binding site for Zn(2+). The active site involves Glu462. His465 and Asp536 together coordinate Zn(2+). Residues 647-768 are disordered; that stretch reads EESIQKGSEG…SNFKLPSFME (122 aa). The span at 669-698 shows a compositional bias: basic and acidic residues; sequence QENKTVEAEVHDSNLKSDTEKLAEAVREIT. Over residues 715–731 the composition is skewed to acidic residues; that stretch reads KDSDDNEKNDDDNENSD.

It in the central section; belongs to the AAA ATPase family. This sequence in the C-terminal section; belongs to the peptidase M41 family. In terms of assembly, homohexamer. It depends on Zn(2+) as a cofactor.

It localises to the cell inner membrane. Acts as a processive, ATP-dependent zinc metallopeptidase for both cytoplasmic and membrane proteins. Plays a role in the quality control of integral membrane proteins. The protein is ATP-dependent zinc metalloprotease FtsH of Leptotrichia buccalis (strain ATCC 14201 / DSM 1135 / JCM 12969 / NCTC 10249 / C-1013-b).